The sequence spans 389 residues: GTPase Obg (389 aa).

The Obg domain occupies 1–159; sequence MKFVDEAVIR…RSLKLELLLL (159 aa). Residues 160 to 333 enclose the OBG-type G domain; sequence ADVGLLGMPN…LALKLLDYIA (174 aa). GTP is bound by residues 166 to 173, 191 to 195, 213 to 216, 283 to 286, and 314 to 316; these read GMPNAGKS, FTTLV, DIPG, NKTD, and SAY. Mg(2+) contacts are provided by Ser173 and Thr193.

The protein belongs to the TRAFAC class OBG-HflX-like GTPase superfamily. OBG GTPase family. Monomer. Mg(2+) serves as cofactor.

It localises to the cytoplasm. Functionally, an essential GTPase which binds GTP, GDP and possibly (p)ppGpp with moderate affinity, with high nucleotide exchange rates and a fairly low GTP hydrolysis rate. Plays a role in control of the cell cycle, stress response, ribosome biogenesis and in those bacteria that undergo differentiation, in morphogenesis control. The protein is GTPase Obg of Shewanella baltica (strain OS223).